We begin with the raw amino-acid sequence, 67 residues long: Prokaryotic ubiquitin-like protein Pup (67 aa).

Residues 1-13 show a composition bias toward low complexity; the sequence is MAGQEQQQPQSRD. The segment at 1 to 48 is disordered; sequence MAGQEQQQPQSRDSQVDEDIPEAPPAPPEAQASASTEGVDDLLDEIDG. The tract at residues 25-61 is ARC ATPase binding; it reads PAPPEAQASASTEGVDDLLDEIDGVLESNAEEFVRAF. Positions 38 to 48 are enriched in acidic residues; the sequence is GVDDLLDEIDG. A Deamidated glutamine modification is found at glutamine 67. Glutamine 67 participates in a covalent cross-link: Isoglutamyl lysine isopeptide (Gln-Lys) (interchain with K-? in acceptor proteins).

Belongs to the prokaryotic ubiquitin-like protein family. In terms of assembly, strongly interacts with the proteasome-associated ATPase ARC through a hydrophobic interface; the interacting region of Pup lies in its C-terminal half. There is one Pup binding site per ARC hexamer ring. Is modified by deamidation of its C-terminal glutamine to glutamate by the deamidase Dop, a prerequisite to the subsequent pupylation process.

It participates in protein degradation; proteasomal Pup-dependent pathway. In terms of biological role, protein modifier that is covalently attached to lysine residues of substrate proteins, thereby targeting them for proteasomal degradation. The tagging system is termed pupylation. This Pseudarthrobacter chlorophenolicus (strain ATCC 700700 / DSM 12829 / CIP 107037 / JCM 12360 / KCTC 9906 / NCIMB 13794 / A6) (Arthrobacter chlorophenolicus) protein is Prokaryotic ubiquitin-like protein Pup.